The sequence spans 168 residues: Photosystem I assembly protein Ycf3 (168 aa).

3 TPR repeats span residues 35 to 68 (AFTYYRDGMSAQSEGNYAEALQNYYEAMRLEIDP), 72 to 105 (SYILYNIGLIHTSNGEHTKALEYYFRALERNPFL), and 120 to 153 (GEQAIQQGDSELAETWFDQAAEYWKQAIALTPGN).

It belongs to the Ycf3 family.

The protein localises to the plastid. Its subcellular location is the chloroplast thylakoid membrane. Its function is as follows. Essential for the assembly of the photosystem I (PSI) complex. May act as a chaperone-like factor to guide the assembly of the PSI subunits. The protein is Photosystem I assembly protein Ycf3 of Ipomoea purpurea (Common morning glory).